The following is a 517-amino-acid chain: Argininosuccinate lyase, chloroplastic (517 aa).

Residues 1 to 45 (MGAIDLSFSQSLLFSSSRSNLSSSTHRSVSFLPPGSKSRCLPPLR) constitute a chloroplast transit peptide. 2-(N(omega)-L-arginino)succinate contacts are provided by serine 79, asparagine 166, and threonine 211. The active-site Proton acceptor is histidine 212. Serine 333 serves as the catalytic Proton donor. 4 residues coordinate 2-(N(omega)-L-arginino)succinate: asparagine 341, tyrosine 373, glutamine 378, and lysine 381.

This sequence belongs to the lyase 1 family. Argininosuccinate lyase subfamily.

It is found in the plastid. Its subcellular location is the chloroplast. It carries out the reaction 2-(N(omega)-L-arginino)succinate = fumarate + L-arginine. Its pathway is amino-acid biosynthesis; L-arginine biosynthesis; L-arginine from L-ornithine and carbamoyl phosphate: step 3/3. The protein is Argininosuccinate lyase, chloroplastic of Arabidopsis thaliana (Mouse-ear cress).